The chain runs to 278 residues: MSVVQPAGRRLTVRDIASRKSPAAEPVVCLTAYTAPMARLLDPHVDLLLVGDSLGMVIYGLPTTHGVTVEMMIAHGQAVVRGSSHALVVVDMPFGSYQESPAQAFRNAARILSETGAAAVKLEGGREMAETVAFLVQRGVPVMGHVGLKPQMVHAMGGFRAQGRDEAEAEAVVAETRAIAEAGAFSIVVEGTFEQVAARATREVSVPTIGIGASADCDGQVLVIDDALGLFTDFTPKFVKRYADLASTVSAAAEAYAADVRARRFPAPEHCFGIRKVG.

Residues aspartate 52 and aspartate 91 each contribute to the Mg(2+) site. 3-methyl-2-oxobutanoate-binding positions include 52–53 (DS), aspartate 91, and lysine 121. Mg(2+) is bound at residue glutamate 123. Residue glutamate 190 is the Proton acceptor of the active site.

This sequence belongs to the PanB family. As to quaternary structure, homodecamer; pentamer of dimers. It depends on Mg(2+) as a cofactor.

The protein localises to the cytoplasm. The catalysed reaction is 3-methyl-2-oxobutanoate + (6R)-5,10-methylene-5,6,7,8-tetrahydrofolate + H2O = 2-dehydropantoate + (6S)-5,6,7,8-tetrahydrofolate. Its pathway is cofactor biosynthesis; (R)-pantothenate biosynthesis; (R)-pantoate from 3-methyl-2-oxobutanoate: step 1/2. Its function is as follows. Catalyzes the reversible reaction in which hydroxymethyl group from 5,10-methylenetetrahydrofolate is transferred onto alpha-ketoisovalerate to form ketopantoate. This chain is 3-methyl-2-oxobutanoate hydroxymethyltransferase, found in Rhodospirillum rubrum (strain ATCC 11170 / ATH 1.1.1 / DSM 467 / LMG 4362 / NCIMB 8255 / S1).